A 432-amino-acid chain; its full sequence is Glutamate-1-semialdehyde 2,1-aminomutase 2 (432 aa).

Lys268 is modified (N6-(pyridoxal phosphate)lysine).

Belongs to the class-III pyridoxal-phosphate-dependent aminotransferase family. HemL subfamily. In terms of assembly, homodimer. Pyridoxal 5'-phosphate is required as a cofactor.

The protein resides in the cytoplasm. The enzyme catalyses (S)-4-amino-5-oxopentanoate = 5-aminolevulinate. The protein operates within porphyrin-containing compound metabolism; protoporphyrin-IX biosynthesis; 5-aminolevulinate from L-glutamyl-tRNA(Glu): step 2/2. The protein is Glutamate-1-semialdehyde 2,1-aminomutase 2 of Listeria monocytogenes serotype 4b (strain CLIP80459).